We begin with the raw amino-acid sequence, 321 residues long: Peptide transport system permease protein SapB (321 aa).

At 1–8 the chain is on the cytoplasmic side; it reads MIIFTLRR. A helical membrane pass occupies residues 9–29; sequence LLLLLVTLFFLTFIGFSLSYF. The Periplasmic segment spans residues 30-80; sequence TPHAPLQGASLWNAWVFWFNGLLHWDFGVSSINGQLISEQLKEVFPATMEL. In terms of domain architecture, ABC transmembrane type-1 spans 74–302; sequence FPATMELCIL…SLVIVVNVIS (229 aa). The chain crosses the membrane as a helical span at residues 81 to 101; it reads CILAFGFALMVGIPVGMLAGV. Residues 102–113 lie on the Cytoplasmic side of the membrane; that stretch reads TRSKWPDRFISA. The helical transmembrane segment at 114 to 134 threads the bilayer; sequence LALLGFSIPVFWLALLLTLFF. The Periplasmic segment spans residues 135–174; sequence SLTLGWLPVSGRFDLLYEVKPVTGFAIIDAWISDSPWRDE. A helical transmembrane segment spans residues 175–195; that stretch reads MVMSAIRHMVLPVLTLSVAPT. Residues 196–248 lie on the Cytoplasmic side of the membrane; sequence TEVIRLMRISTIEVYDQNYVKAAATRGLSRFTILRRHVLHNALPPVIPRLGLQ. A helical membrane pass occupies residues 249–269; it reads FSTMLTLAMITEMVFSWPGLG. Residues 270-280 lie on the Periplasmic side of the membrane; that stretch reads RWLIHAIRQQD. A helical transmembrane segment spans residues 281–301; the sequence is YAAISAGVMVIGSLVIVVNVI. Topologically, residues 302-321 are cytoplasmic; the sequence is SDILGAMANPLKHKEWYALR.

It belongs to the binding-protein-dependent transport system permease family. OppBC subfamily.

It localises to the cell inner membrane. Functionally, involved in a peptide intake transport system that plays a role in the resistance to antimicrobial peptides. In Salmonella typhimurium (strain LT2 / SGSC1412 / ATCC 700720), this protein is Peptide transport system permease protein SapB.